Consider the following 401-residue polypeptide: Imidazolonepropionase (401 aa).

His66 and His68 together coordinate Fe(3+). His66 and His68 together coordinate Zn(2+). 4-imidazolone-5-propanoate contacts are provided by Arg75, Tyr138, and His171. Position 138 (Tyr138) interacts with N-formimidoyl-L-glutamate. His236 serves as a coordination point for Fe(3+). His236 is a binding site for Zn(2+). Gln239 contributes to the 4-imidazolone-5-propanoate binding site. Asp311 is a Fe(3+) binding site. Asp311 lines the Zn(2+) pocket. Residues Asn313 and Gly315 each contribute to the N-formimidoyl-L-glutamate site. Residue Thr316 coordinates 4-imidazolone-5-propanoate.

It belongs to the metallo-dependent hydrolases superfamily. HutI family. The cofactor is Zn(2+). Fe(3+) serves as cofactor.

The protein resides in the cytoplasm. The enzyme catalyses 4-imidazolone-5-propanoate + H2O = N-formimidoyl-L-glutamate. Its pathway is amino-acid degradation; L-histidine degradation into L-glutamate; N-formimidoyl-L-glutamate from L-histidine: step 3/3. Functionally, catalyzes the hydrolytic cleavage of the carbon-nitrogen bond in imidazolone-5-propanoate to yield N-formimidoyl-L-glutamate. It is the third step in the universal histidine degradation pathway. The sequence is that of Imidazolonepropionase from Acinetobacter baumannii (strain AB0057).